The chain runs to 578 residues: Signal peptide peptidase-like 2B (578 aa).

The N-terminal stretch at 1-19 (MAAARLAAALLLLAAQVAC) is a signal peptide. The Lumenal portion of the chain corresponds to 20-168 (EFGVLRVVSQ…APSEPVMDYN (149 aa)). The PA domain maps to 61–145 (LRDLSTTQLC…LLSHRDLQDI (85 aa)). N-linked (GlcNAc...) asparagine glycans are attached at residues N91 and N123. Residues 169–189 (MVIIFVMAVGTVAIGGYWAGS) traverse the membrane as a helical segment. Residues 190–216 (HDVKKYMKHKRDDGPEKQEDEAVDVTP) are Cytoplasmic-facing. The chain crosses the membrane as a helical span at residues 217–237 (VMICVFVVMCCFMLVLLYYFY). Residues 238 to 239 (DR) lie on the Lumenal side of the membrane. A helical membrane pass occupies residues 240–260 (LVYVIIGIFCLASSTGLYSCL). Over 261–286 (APFVRKLPFCTCRVPDNNLPYFHKRP) the chain is Cytoplasmic. Residues 287 to 307 (QARMLLLALFCVTVSVVWGIF) traverse the membrane as a helical segment. The Lumenal portion of the chain corresponds to 308 to 312 (RNEDQ). Residues 313 to 333 (WAWVLQDTLGIAFCLYMLKTI) traverse the membrane as a helical segment. The Cytoplasmic segment spans residues 334-341 (RLPTFKAC). Residues 342–362 (TLLLLVLFIYDIFFVFITPFL) traverse the membrane as a helical segment. D352 is an active-site residue. Over 363 to 405 (TKSGNSIMVEVATGPSNSSTHEKLPMVLKVPRLNTSPLSLCDR) the chain is Lumenal. The chain crosses the membrane as a helical span at residues 406–426 (PFSLLGFGDILVPGLLVAYCH). Residue D414 is part of the active site. At 427 to 438 (RFDIQVQSSRIY) the chain is on the cytoplasmic side. Residues 439–459 (FVACTIAYGLGLLVTFVALVL) form a helical membrane-spanning segment. The Lumenal segment spans residues 460–463 (MQRG). A helical transmembrane segment spans residues 464–484 (QPALLYLVPCTLLTSCTVALW). The short motif at 465-467 (PAL) is the PAL element. At 485 to 578 (RRELGAFWTG…IPVVKPETSA (94 aa)) the chain is on the cytoplasmic side. A disordered region spans residues 502 to 578 (PQTPWAATQG…IPVVKPETSA (77 aa)). Low complexity predominate over residues 520–529 (SSLSEQPPSE).

The protein belongs to the peptidase A22B family. As to quaternary structure, monomer. Homodimer. Interacts with ITM2B and TNF. In terms of processing, glycosylated.

The protein localises to the cell membrane. It localises to the golgi apparatus membrane. Its subcellular location is the lysosome membrane. The protein resides in the endosome membrane. It is found in the membrane. In terms of biological role, intramembrane-cleaving aspartic protease (I-CLiP) that cleaves type II membrane signal peptides in the hydrophobic plane of the membrane. Functions in ITM2B and TNF processing. Catalyzes the intramembrane cleavage of the anchored fragment of shed TNF-alpha (TNF), which promotes the release of the intracellular domain (ICD) for signaling to the nucleus. May play a role in the regulation of innate and adaptive immunity. The sequence is that of Signal peptide peptidase-like 2B from Mus musculus (Mouse).